We begin with the raw amino-acid sequence, 927 residues long: 2-oxoadipate dehydrogenase complex component E1 (927 aa).

This sequence belongs to the alpha-ketoglutarate dehydrogenase family. In terms of assembly, the 2-oxoadipate dehydrogenase complex is composed of OADH (2-oxoadipate dehydrogenase; E1a), DLST (dihydrolipoamide succinyltransferase; E2) and DLD (dihydrolipoamide dehydrogenase; E3). E1a functional unit is a dimer. Thiamine diphosphate serves as cofactor.

It localises to the mitochondrion. The enzyme catalyses N(6)-[(R)-lipoyl]-L-lysyl-[protein] + 2-oxoadipate + H(+) = N(6)-[(R)-S(8)-glutaryldihydrolipoyl]-L-lysyl-[protein] + CO2. It participates in amino-acid degradation. Functionally, 2-oxoadipate dehydrogenase (E1a) component of the 2-oxoadipate dehydrogenase complex (OADHC). Participates in the first step, rate limiting for the overall conversion of 2-oxoadipate (alpha-ketoadipate) to glutaryl-CoA and CO(2) catalyzed by the whole OADHC. Catalyzes the irreversible decarboxylation of 2-oxoadipate via the thiamine diphosphate (ThDP) cofactor and subsequent transfer of the decarboxylated acyl intermediate on an oxidized dihydrolipoyl group that is covalently amidated to the E2 enzyme (dihydrolipoyllysine-residue succinyltransferase or DLST). Can catalyze the decarboxylation of 2-oxoglutarate in vitro, but at a much lower rate than 2-oxoadipate. Responsible for the last step of L-lysine, L-hydroxylysine and L-tryptophan catabolism with the common product being 2-oxoadipate. The chain is 2-oxoadipate dehydrogenase complex component E1 (dhtkd1) from Xenopus laevis (African clawed frog).